The primary structure comprises 244 residues: Sugar fermentation stimulation protein homolog (244 aa).

This sequence belongs to the SfsA family.

This Dinoroseobacter shibae (strain DSM 16493 / NCIMB 14021 / DFL 12) protein is Sugar fermentation stimulation protein homolog.